The chain runs to 88 residues: Small ribosomal subunit protein bS20 (88 aa).

The protein belongs to the bacterial ribosomal protein bS20 family.

In terms of biological role, binds directly to 16S ribosomal RNA. This is Small ribosomal subunit protein bS20 from Mycoplasmopsis synoviae (strain 53) (Mycoplasma synoviae).